A 524-amino-acid polypeptide reads, in one-letter code: Putative ribose/galactose/methyl galactoside import ATP-binding protein 1 (524 aa).

2 ABC transporter domains span residues leucine 35 to glutamate 271 and valine 281 to aspartate 520. Glycine 67–serine 74 contacts ATP.

The protein belongs to the ABC transporter superfamily. Carbohydrate importer 2 (CUT2) (TC 3.A.1.2) family.

Its subcellular location is the cell inner membrane. The enzyme catalyses D-ribose(out) + ATP + H2O = D-ribose(in) + ADP + phosphate + H(+). The catalysed reaction is D-galactose(out) + ATP + H2O = D-galactose(in) + ADP + phosphate + H(+). Its function is as follows. Part of an ABC transporter complex involved in carbohydrate import. Could be involved in ribose, galactose and/or methyl galactoside import. Responsible for energy coupling to the transport system. The protein is Putative ribose/galactose/methyl galactoside import ATP-binding protein 1 of Burkholderia cenocepacia (strain HI2424).